The sequence spans 208 residues: Small ribosomal subunit protein uS4 (208 aa).

The 62-residue stretch at 98-159 (LRLDNVAYRL…AARTHIRIAA (62 aa)) folds into the S4 RNA-binding domain.

Belongs to the universal ribosomal protein uS4 family. Part of the 30S ribosomal subunit. Contacts protein S5. The interaction surface between S4 and S5 is involved in control of translational fidelity.

Its function is as follows. One of the primary rRNA binding proteins, it binds directly to 16S rRNA where it nucleates assembly of the body of the 30S subunit. Functionally, with S5 and S12 plays an important role in translational accuracy. This is Small ribosomal subunit protein uS4 from Acidithiobacillus ferrooxidans (strain ATCC 23270 / DSM 14882 / CIP 104768 / NCIMB 8455) (Ferrobacillus ferrooxidans (strain ATCC 23270)).